We begin with the raw amino-acid sequence, 884 residues long: Coatomer subunit gamma-1 (884 aa).

HEAT repeat units lie at residues Val65–Ser100, Asp101–Leu138, Arg286–Leu323, Val325–Glu357, and Ser358–Leu395. Positions Gln592 to Ala612 are disordered. The span at Lys602–Ala612 shows a compositional bias: pro residues.

It belongs to the COPG family. As to quaternary structure, oligomeric complex that consists of at least the alpha, beta, beta', gamma, delta, epsilon and zeta subunits.

It is found in the cytoplasm. Its subcellular location is the golgi apparatus membrane. The protein localises to the cytoplasmic vesicle. The protein resides in the COPI-coated vesicle membrane. Functionally, the coatomer is a cytosolic protein complex that binds to dilysine motifs and reversibly associates with Golgi non-clathrin-coated vesicles, which further mediate biosynthetic protein transport from the ER, via the Golgi up to the trans Golgi network. Coatomer complex is required for budding from Golgi membranes, and is essential for the retrograde Golgi-to-ER transport of dilysine-tagged proteins. The sequence is that of Coatomer subunit gamma-1 from Oryza sativa subsp. japonica (Rice).